A 706-amino-acid polypeptide reads, in one-letter code: Histone deacetylase HDA1 (706 aa).

The span at 1–24 (MDSVMVKKEVLENPDHDLKRKLEE) shows a compositional bias: basic and acidic residues. A disordered region spans residues 1–36 (MDSVMVKKEVLENPDHDLKRKLEENKEEENSLSTTS). The tract at residues 67-396 (RYHAKIFTSY…ALSVAKVLIG (330 aa)) is histone deacetylase. His-206 is an active-site residue.

Belongs to the histone deacetylase family. HD type 2 subfamily.

The protein resides in the nucleus. It carries out the reaction N(6)-acetyl-L-lysyl-[histone] + H2O = L-lysyl-[histone] + acetate. Its function is as follows. Responsible for the deacetylation of lysine residues on the N-terminal part of the core histones (H2A, H2B, H3 and H4). Histone deacetylation gives a tag for epigenetic repression and plays an important role in transcriptional regulation, cell cycle progression and developmental events. Histone deacetylases act via the formation of large multiprotein complexes. The sequence is that of Histone deacetylase HDA1 (HDA1) from Saccharomyces cerevisiae (strain ATCC 204508 / S288c) (Baker's yeast).